The primary structure comprises 447 residues: Phosphatidylinositol N-acetylglucosaminyltransferase subunit A (447 aa).

The Cytoplasmic portion of the chain corresponds to 1 to 387 (MAEPPKLRVL…NRSLLERLMR (387 aa)). A helical transmembrane segment spans residues 388 to 408 (FLSCGAWAGKLFCMVMILDYL). Topologically, residues 409–447 (LWRLLQLLQPDEDIEEAPDICLCHHRGVEVSEGLRKKIK) are lumenal.

Belongs to the glycosyltransferase group 1 family. Glycosyltransferase 4 subfamily. In terms of tissue distribution, expressed in roots, stems, leaves, flowers and pollen grains.

It localises to the endoplasmic reticulum membrane. The catalysed reaction is a 1,2-diacyl-sn-glycero-3-phospho-(1D-myo-inositol) + UDP-N-acetyl-alpha-D-glucosamine = a 6-(N-acetyl-alpha-D-glucosaminyl)-1-(1,2-diacyl-sn-glycero-3-phospho)-1D-myo-inositol + UDP + H(+). It functions in the pathway glycolipid biosynthesis; glycosylphosphatidylinositol-anchor biosynthesis. Its function is as follows. Necessary for the synthesis of N-acetylglucosaminyl-phosphatidylinositol, the very early intermediate in GPI-anchor biosynthesis. Required for pollen germination and pollen tube growth. In Arabidopsis thaliana (Mouse-ear cress), this protein is Phosphatidylinositol N-acetylglucosaminyltransferase subunit A.